Here is a 307-residue protein sequence, read N- to C-terminus: HPr kinase/phosphorylase (307 aa).

Catalysis depends on residues H136 and K157. 151–158 (GESGIGKS) contributes to the ATP binding site. Residue S158 participates in Mg(2+) binding. The active-site Proton acceptor; for phosphorylation activity. Proton donor; for dephosphorylation activity is D175. Positions 198–207 (LEVRGMGIID) are important for the catalytic mechanism of both phosphorylation and dephosphorylation. E199 lines the Mg(2+) pocket. R240 is a catalytic residue. Residues 261 to 266 (PIRPGR) are important for the catalytic mechanism of dephosphorylation.

The protein belongs to the HPrK/P family. Homohexamer. Requires Mg(2+) as cofactor.

The catalysed reaction is [HPr protein]-L-serine + ATP = [HPr protein]-O-phospho-L-serine + ADP + H(+). The enzyme catalyses [HPr protein]-O-phospho-L-serine + phosphate + H(+) = [HPr protein]-L-serine + diphosphate. In terms of biological role, catalyzes the ATP- as well as the pyrophosphate-dependent phosphorylation of a specific serine residue in HPr, a phosphocarrier protein of the phosphoenolpyruvate-dependent sugar phosphotransferase system (PTS). HprK/P also catalyzes the pyrophosphate-producing, inorganic phosphate-dependent dephosphorylation (phosphorolysis) of seryl-phosphorylated HPr (P-Ser-HPr). The two antagonistic activities of HprK/P are regulated by several intracellular metabolites, which change their concentration in response to the absence or presence of rapidly metabolisable carbon sources (glucose, fructose, etc.) in the growth medium. Therefore, by controlling the phosphorylation state of HPr, HPrK/P is a sensor enzyme that plays a major role in the regulation of carbon metabolism and sugar transport: it mediates carbon catabolite repression (CCR), and regulates PTS-catalyzed carbohydrate uptake and inducer exclusion. This chain is HPr kinase/phosphorylase, found in Clostridium perfringens (strain ATCC 13124 / DSM 756 / JCM 1290 / NCIMB 6125 / NCTC 8237 / Type A).